Reading from the N-terminus, the 134-residue chain is Small ribosomal subunit protein uS8c (134 aa).

Belongs to the universal ribosomal protein uS8 family. Part of the 30S ribosomal subunit.

The protein localises to the plastid. It is found in the chloroplast. One of the primary rRNA binding proteins, it binds directly to 16S rRNA central domain where it helps coordinate assembly of the platform of the 30S subunit. In Aethionema cordifolium (Lebanon stonecress), this protein is Small ribosomal subunit protein uS8c (rps8).